A 354-amino-acid polypeptide reads, in one-letter code: Homoserine O-succinyltransferase (354 aa).

Residue C146 is the Acyl-thioester intermediate of the active site. Positions 167 and 196 each coordinate substrate. H239 serves as the catalytic Proton acceptor. E241 is a catalytic residue. R253 is a substrate binding site.

Belongs to the MetA family.

Its subcellular location is the cytoplasm. It carries out the reaction L-homoserine + succinyl-CoA = O-succinyl-L-homoserine + CoA. It functions in the pathway amino-acid biosynthesis; L-methionine biosynthesis via de novo pathway; O-succinyl-L-homoserine from L-homoserine: step 1/1. Its function is as follows. Transfers a succinyl group from succinyl-CoA to L-homoserine, forming succinyl-L-homoserine. In Methylobacter tundripaludum (strain ATCC BAA-1195 / DSM 17260 / SV96), this protein is Homoserine O-succinyltransferase.